We begin with the raw amino-acid sequence, 292 residues long: Ribosomal protein L11 methyltransferase (292 aa).

S-adenosyl-L-methionine-binding residues include Thr136, Gly159, Asp181, and Asn228.

This sequence belongs to the methyltransferase superfamily. PrmA family.

Its subcellular location is the cytoplasm. It carries out the reaction L-lysyl-[protein] + 3 S-adenosyl-L-methionine = N(6),N(6),N(6)-trimethyl-L-lysyl-[protein] + 3 S-adenosyl-L-homocysteine + 3 H(+). In terms of biological role, methylates ribosomal protein L11. The polypeptide is Ribosomal protein L11 methyltransferase (Rhizobium rhizogenes (strain K84 / ATCC BAA-868) (Agrobacterium radiobacter)).